Reading from the N-terminus, the 305-residue chain is Coiled-coil domain-containing protein 69-A (305 aa).

Gly2 carries N-myristoyl glycine lipidation. The segment at 13-38 (LRKKKRQKAHQGGLTSQELNDLNAKT) is disordered. A compositionally biased stretch (polar residues) spans 25–38 (GLTSQELNDLNAKT). A coiled-coil region spans residues 42 to 281 (NEVLQKIKEY…QREKEQNLYR (240 aa)).

It belongs to the CCDC69 family.

The protein resides in the cytoplasm. Its subcellular location is the cytoskeleton. It is found in the spindle. The protein localises to the midbody. Functionally, may act as a scaffold to regulate the recruitment and assembly of spindle midzone components. This Xenopus laevis (African clawed frog) protein is Coiled-coil domain-containing protein 69-A (ccdc69-a).